Reading from the N-terminus, the 98-residue chain is Phosphoribosyl-ATP pyrophosphatase (98 aa).

The protein belongs to the PRA-PH family.

The protein localises to the cytoplasm. The enzyme catalyses 1-(5-phospho-beta-D-ribosyl)-ATP + H2O = 1-(5-phospho-beta-D-ribosyl)-5'-AMP + diphosphate + H(+). The protein operates within amino-acid biosynthesis; L-histidine biosynthesis; L-histidine from 5-phospho-alpha-D-ribose 1-diphosphate: step 2/9. This chain is Phosphoribosyl-ATP pyrophosphatase, found in Haloarcula marismortui (strain ATCC 43049 / DSM 3752 / JCM 8966 / VKM B-1809) (Halobacterium marismortui).